The chain runs to 570 residues: Zona pellucida sperm-binding protein 4 (570 aa).

The signal sequence occupies residues 1–19 (MWLLQPLLLCVPLSLAVHG). The Extracellular portion of the chain corresponds to 20–545 (QQKPQVPDYP…SSSPIDSQAL (526 aa)). N-linked (GlcNAc...) asparagine glycosylation occurs at asparagine 68. A P-type domain is found at 177–218 (DLCDSVPKWDRLPCASSPITQGDCNKLGCCYKSEANSCYYGN). The ZP domain maps to 223-496 (RCTQDGHFSI…SSCRITCPVA (274 aa)). N-linked (GlcNAc...) asparagine glycosylation is present at asparagine 237. O-linked (GalNAc...) threonine glycosylation occurs at threonine 337. Cysteine 402 and cysteine 476 are oxidised to a cystine. 2 N-linked (GlcNAc...) asparagine glycosylation sites follow: asparagine 477 and asparagine 535. A propeptide spans 497 to 570 (RRRRHSDLHH…VSYLAIRKRR (74 aa)) (removed in mature form). A helical membrane pass occupies residues 546–566 (WMAGLSGTLIFGFLLVSYLAI). At 567 to 570 (RKRR) the chain is on the cytoplasmic side.

It belongs to the ZP domain family. ZPB subfamily. In terms of processing, proteolytically cleaved before the transmembrane segment to yield the secreted ectodomain incorporated in the zona pellucida. Expressed in oocytes.

The protein resides in the zona pellucida. It localises to the cell membrane. In terms of biological role, component of the zona pellucida, an extracellular matrix surrounding oocytes which mediates sperm binding, induction of the acrosome reaction and prevents post-fertilization polyspermy. The zona pellucida is composed of 3 to 4 glycoproteins, ZP1, ZP2, ZP3, and ZP4. ZP4 may act as a sperm receptor. The protein is Zona pellucida sperm-binding protein 4 (ZP4) of Felis catus (Cat).